The sequence spans 322 residues: MSSNKLPTSKYDLSTYWGRVRHAMDITDPRTLLSTSQDLNSAVKTLEDYGAGKIAQLDETVWHAKKIVDSTLHPDTKEPVFLPFRMSCFVLTNLVVTAGMLQPNLGTAGTVFWQWMNQSVNVAFNSANANKSTQLTLPQMTKSYIYAVSASCGVAIGLNKIVPRMNFLSSSSKAVLGRLTPFAAVASAGVLNVFLMRGEELRQGIDVFDKEGESLGKSKKAAFYAVGETALSRVINASPIMVIPPLVLMRLQKQNWLRTRPKLTIPVNLGLITLTSLIALPLAIGVFPAREKISPFKLEPQFHHLKDKSDQPIVEVEFNRGL.

4 helical membrane-spanning segments follow: residues 143-163 (SYIYAVSASCGVAIGLNKIVP), 175-195 (VLGRLTPFAAVASAGVLNVFL), 229-249 (TALSRVINASPIMVIPPLVLM), and 269-289 (LGLITLTSLIALPLAIGVFPA).

The protein belongs to the sideroflexin family.

The protein resides in the mitochondrion membrane. Mitochondrial amino-acid transporter that mediates transport of serine into mitochondria. The protein is Sideroflexin fsf1 of Schizosaccharomyces pombe (strain 972 / ATCC 24843) (Fission yeast).